The chain runs to 101 residues: UPF0473 protein spr0177 (101 aa).

The protein belongs to the UPF0473 family.

This is UPF0473 protein spr0177 from Streptococcus pneumoniae (strain ATCC BAA-255 / R6).